The primary structure comprises 113 residues: Early nodulin-12B (113 aa).

The first 24 residues, 1 to 24, serve as a signal peptide directing secretion; the sequence is MASFSLSILVFFISALVLVPQGFA. A disordered region spans residues 29–113; that stretch reads NPAYRPPQTK…HPPAEDNIHF (85 aa). Positions 32–42 are enriched in pro residues; the sequence is YRPPQTKPPVN. Repeat copies occupy residues 34 to 38 and 39 to 43. A 15 X 5 AA approximate tandem repeats of P-P-[QVHRTA]-[NHKE]-[KEDT] region spans residues 34–109; sequence PPQTKPPVNK…PTHKHPPAED (76 aa). The stretch at 44-48 is one 3; approximate repeat; the sequence is PSHKE. Basic and acidic residues-rich tracts occupy residues 45-60 and 67-113; these read SHKE…KEPP and KEPP…NIHF. Tandem repeats lie at residues 49 to 53, 54 to 58, and 59 to 63. One copy of the 7; approximate repeat lies at 64 to 68; that stretch reads PRHKE. A run of 4 repeats spans residues 69–73, 74–78, 79–83, and 84–88. The 12; approximate repeat unit spans residues 89–93; it reads SPVHK. Tandem repeats lie at residues 94 to 98, 99 to 103, and 105 to 109.

The protein belongs to the plant proline-rich protein superfamily. ENOD12 family. In terms of tissue distribution, expressed only in young nodules.

The protein localises to the secreted. It localises to the cell wall. Functionally, involved in the infection process during the plant-rhizobium interaction. This Medicago sativa (Alfalfa) protein is Early nodulin-12B (ENOD12B).